The sequence spans 156 residues: MDYQQKPPQSSDPSPSPPDRPPGIRSPETPSNNQNNDIEDIMACVTALEAALLPCLPARELQAIDRSPHPSHQIDVERHARDFMEAAKKLQLYFMGLKREDRAPSRAESLKKDIAVMEEELKTKDELIKKHMRLFQESQKLVKEQIEKHRDELEKV.

The segment at 1 to 38 is disordered; that stretch reads MDYQQKPPQSSDPSPSPPDRPPGIRSPETPSNNQNNDI. The stretch at 104–156 forms a coiled coil; the sequence is PSRAESLKKDIAVMEEELKTKDELIKKHMRLFQESQKLVKEQIEKHRDELEKV.

This sequence belongs to the Mediator complex subunit 28 family. Dimers. Component of the Mediator complex. Interacts with GEBPL.

It localises to the nucleus. Component of the Mediator complex, a coactivator involved in the regulated transcription of nearly all RNA polymerase II-dependent genes. Mediator functions as a bridge to convey information from gene-specific regulatory proteins to the basal RNA polymerase II transcription machinery. The Mediator complex, having a compact conformation in its free form, is recruited to promoters by direct interactions with regulatory proteins and serves for the assembly of a functional pre-initiation complex with RNA polymerase II and the general transcription factors. The chain is Mediator of RNA polymerase II transcription subunit 28 from Arabidopsis thaliana (Mouse-ear cress).